The chain runs to 670 residues: Probable plastid-lipid-associated protein 14, chloroplastic (670 aa).

Residues 1-52 (MALCGVCSTPNLPNLQVFRSVRNSSIGYKRNHSLWQLRSSSFRAKSVIFHCS) constitute a chloroplast transit peptide. Residues 88 to 399 (FRILDRVSIG…CLDALKHPFL (312 aa)) enclose the Protein kinase domain.

Belongs to the PAP/fibrillin family. In terms of processing, not autophosphorylated. In terms of tissue distribution, expressed in roots.

Its subcellular location is the plastid. It localises to the chloroplast. In terms of biological role, directly regulated by DOF3.6/OBP3; unknown function. This is Probable plastid-lipid-associated protein 14, chloroplastic (PAP14) from Arabidopsis thaliana (Mouse-ear cress).